The primary structure comprises 194 residues: Large ribosomal subunit protein uL6m (194 aa).

This sequence belongs to the universal ribosomal protein uL6 family.

It is found in the mitochondrion. This is Large ribosomal subunit protein uL6m (RPL6) from Prototheca wickerhamii.